A 389-amino-acid chain; its full sequence is Nicotinate phosphoribosyltransferase (389 aa).

Histidine 211 is subject to Phosphohistidine; by autocatalysis.

Belongs to the NAPRTase family. Post-translationally, transiently phosphorylated on a His residue during the reaction cycle. Phosphorylation strongly increases the affinity for substrates and increases the rate of nicotinate D-ribonucleotide production. Dephosphorylation regenerates the low-affinity form of the enzyme, leading to product release.

The enzyme catalyses nicotinate + 5-phospho-alpha-D-ribose 1-diphosphate + ATP + H2O = nicotinate beta-D-ribonucleotide + ADP + phosphate + diphosphate. The protein operates within cofactor biosynthesis; NAD(+) biosynthesis; nicotinate D-ribonucleotide from nicotinate: step 1/1. Catalyzes the synthesis of beta-nicotinate D-ribonucleotide from nicotinate and 5-phospho-D-ribose 1-phosphate at the expense of ATP. In Desulforapulum autotrophicum (strain ATCC 43914 / DSM 3382 / VKM B-1955 / HRM2) (Desulfobacterium autotrophicum), this protein is Nicotinate phosphoribosyltransferase.